The primary structure comprises 148 residues: Protein NrdI (148 aa).

Belongs to the NrdI family.

Functionally, probably involved in ribonucleotide reductase function. The chain is Protein NrdI from Mycolicibacterium gilvum (strain PYR-GCK) (Mycobacterium gilvum (strain PYR-GCK)).